The sequence spans 316 residues: Ribosomal RNA small subunit methyltransferase H (316 aa).

Residues 32–34 (AGH), aspartate 52, phenylalanine 79, aspartate 106, and glutamine 113 each bind S-adenosyl-L-methionine.

The protein belongs to the methyltransferase superfamily. RsmH family.

The protein localises to the cytoplasm. It catalyses the reaction cytidine(1402) in 16S rRNA + S-adenosyl-L-methionine = N(4)-methylcytidine(1402) in 16S rRNA + S-adenosyl-L-homocysteine + H(+). Its function is as follows. Specifically methylates the N4 position of cytidine in position 1402 (C1402) of 16S rRNA. This Paenibacillus sp. (strain JDR-2) protein is Ribosomal RNA small subunit methyltransferase H.